Here is a 239-residue protein sequence, read N- to C-terminus: MRIERVDDTTVKLFITYSDIEARGFSREDLWTNRKRGEEFFWSMMDEINEEEDFVVEGPLWIQVHAFEKGVEVTISKSKNEDMMNMSDDDATDQFDEQVQELLAQTLEGEDQLEELFEQRTKEKEAQGSKRQKSSARKNTRTIIVKFNDLEDVINYAYHTNPITTEFEDLLYMVDGTYYYAVHFDSHVDQEVINDSYSQLLEFAYPTDRTEVYLNDYAKIIMSHNVTAQVRRYFPETTE.

Residues 118 to 128 (EQRTKEKEAQG) show a composition bias toward basic and acidic residues. The segment at 118 to 137 (EQRTKEKEAQGSKRQKSSAR) is disordered.

Belongs to the MecA family. Homodimer.

Its function is as follows. Enables the recognition and targeting of unfolded and aggregated proteins to the ClpC protease or to other proteins involved in proteolysis. The chain is Adapter protein MecA from Staphylococcus aureus (strain bovine RF122 / ET3-1).